We begin with the raw amino-acid sequence, 754 residues long: Glutathione biosynthesis bifunctional protein GshAB (754 aa).

The tract at residues 1–332 (MTLNQLLQKL…QGHALNEKIA (332 aa)) is glutamate--cysteine ligase. The ATP-grasp domain occupies 488-746 (KKILADASFP…ITTKILDKLF (259 aa)). 515–573 (PLIKDKQIVVKPKSTNFGLGISIFQEPASLDNYQKALEIAFAEDTSVLVEEFIPGTEYR) is a binding site for ATP. Asp695, Glu716, and Asn718 together coordinate Mg(2+). Positions 695, 716, and 718 each coordinate Mn(2+).

In the N-terminal section; belongs to the glutamate--cysteine ligase type 1 family. Type 2 subfamily. As to quaternary structure, monomer. The cofactor is Mg(2+). Mn(2+) serves as cofactor.

The enzyme catalyses L-cysteine + L-glutamate + ATP = gamma-L-glutamyl-L-cysteine + ADP + phosphate + H(+). The catalysed reaction is gamma-L-glutamyl-L-cysteine + glycine + ATP = glutathione + ADP + phosphate + H(+). It participates in sulfur metabolism; glutathione biosynthesis; glutathione from L-cysteine and L-glutamate: step 1/2. It functions in the pathway sulfur metabolism; glutathione biosynthesis; glutathione from L-cysteine and L-glutamate: step 2/2. In terms of biological role, synthesizes glutathione from L-glutamate and L-cysteine via gamma-L-glutamyl-L-cysteine. In Streptococcus thermophilus (strain ATCC BAA-250 / LMG 18311), this protein is Glutathione biosynthesis bifunctional protein GshAB.